The chain runs to 67 residues: Large ribosomal subunit protein uL29 (67 aa).

This sequence belongs to the universal ribosomal protein uL29 family.

This Wolbachia pipientis subsp. Culex pipiens (strain wPip) protein is Large ribosomal subunit protein uL29.